Here is a 260-residue protein sequence, read N- to C-terminus: Zinc import ATP-binding protein ZnuC (260 aa).

Positions 18-234 (IRLQEVAVTF…PEYQKLFGSH (217 aa)) constitute an ABC transporter domain. 50–57 (GNNGAGKT) is an ATP binding site. The segment at 241–260 (VFPHDHHDHSGPALAGGGRG) is disordered.

Belongs to the ABC transporter superfamily. Zinc importer (TC 3.A.1.15.5) family. The complex is composed of two ATP-binding proteins (ZnuC), two transmembrane proteins (ZnuB) and a solute-binding protein (ZnuA).

It localises to the cell inner membrane. The catalysed reaction is Zn(2+)(out) + ATP(in) + H2O(in) = Zn(2+)(in) + ADP(in) + phosphate(in) + H(+)(in). In terms of biological role, part of the ABC transporter complex ZnuABC involved in zinc import. Responsible for energy coupling to the transport system. The chain is Zinc import ATP-binding protein ZnuC from Halorhodospira halophila (strain DSM 244 / SL1) (Ectothiorhodospira halophila (strain DSM 244 / SL1)).